The primary structure comprises 434 residues: Angio-associated migratory cell protein (434 aa).

Residues 1 to 63 form a disordered region; the sequence is MESESESGAA…EEEEEEGNEE (63 aa). Ser-20 is modified (phosphoserine). Positions 39–62 are enriched in acidic residues; it reads DPDDLAQEMEDVDFEEEEEEEGNE. 8 WD repeats span residues 89-129, 132-171, 173-212, 214-254, 258-299, 315-354, 356-395, and 398-433; these read LHSA…LLFE, GHKDSVTCAGFSHDSTLVATGDMSGLLKVWQVDTKEEVWS, EAGDLEWMEWHPRAPVLLAGTADGNTWMWKVPNGDCKTFQ, PNCP…HVLK, GHQG…GVFR, SESNSVESLGFCSVMPLAAVGYLDGTLAIYDLATQTLRHQ, QHQSGIVQLLWEAGTAVVYTCSLDGIVRLWDARTGRLLTD, and GHTAEILDFALSKDASLVVTTSGDHKAKVFCVQRPD.

The protein resides in the cell membrane. Its subcellular location is the cytoplasm. Its function is as follows. Plays a role in angiogenesis and cell migration. In smooth muscle cell migration, may act through the RhoA pathway. The protein is Angio-associated migratory cell protein (AAMP) of Pongo abelii (Sumatran orangutan).